A 404-amino-acid polypeptide reads, in one-letter code: Phosphopentomutase (404 aa).

Positions 10, 303, 308, 344, 345, and 356 each coordinate Mn(2+).

This sequence belongs to the phosphopentomutase family. Mn(2+) is required as a cofactor.

It localises to the cytoplasm. The catalysed reaction is 2-deoxy-alpha-D-ribose 1-phosphate = 2-deoxy-D-ribose 5-phosphate. It carries out the reaction alpha-D-ribose 1-phosphate = D-ribose 5-phosphate. It participates in carbohydrate degradation; 2-deoxy-D-ribose 1-phosphate degradation; D-glyceraldehyde 3-phosphate and acetaldehyde from 2-deoxy-alpha-D-ribose 1-phosphate: step 1/2. In terms of biological role, isomerase that catalyzes the conversion of deoxy-ribose 1-phosphate (dRib-1-P) and ribose 1-phosphate (Rib-1-P) to deoxy-ribose 5-phosphate (dRib-5-P) and ribose 5-phosphate (Rib-5-P), respectively. This is Phosphopentomutase from Shewanella baltica (strain OS155 / ATCC BAA-1091).